A 261-amino-acid polypeptide reads, in one-letter code: tRNA pseudouridine synthase A (261 aa).

D51 serves as the catalytic Nucleophile. A substrate-binding site is contributed by Y109.

It belongs to the tRNA pseudouridine synthase TruA family. In terms of assembly, homodimer.

The enzyme catalyses uridine(38/39/40) in tRNA = pseudouridine(38/39/40) in tRNA. In terms of biological role, formation of pseudouridine at positions 38, 39 and 40 in the anticodon stem and loop of transfer RNAs. This chain is tRNA pseudouridine synthase A, found in Shewanella sp. (strain ANA-3).